The primary structure comprises 155 residues: Protein LOL2 (155 aa).

At Met-1 the chain carries N-acetylmethionine. Residues 1–35 (MEEIQQQTQKEEQKHREEEEEEEEGPPPGWESAVL) are disordered. 2 putative zinc finger regions span residues 60-90 (QMVC…VNLV) and 98-128 (QVNC…VTDI). Residues 130–155 (ENNKRPPWSEQQGPLKSLSSLRRAEN) are disordered. Polar residues predominate over residues 138 to 149 (SEQQGPLKSLSS).

The protein resides in the nucleus. Putative zinc finger that may be involved in programmed cell death and defense response. This is Protein LOL2 (LOL2) from Arabidopsis thaliana (Mouse-ear cress).